A 426-amino-acid chain; its full sequence is MSHSASLYAEAQQLIPGGVNSPVRAFNGVGGTPLFIASADGARLTDADGNSYIDYVGSWGPMVLGHNHPAIRQAVLDAVQRGLSFGAPTEIEVKMARLLTELVPSIESVRMVNSGTEATMSTIRLARGYTGRDRVIKFEGCYHGHADGLLVKAGSGALTLGQPSSPGVPADYAKYTLTCSYNDLQSVREAFTLYPREIACVIVEPVAGNMNCVPPLPEFLPGLRALCDEFGALLIIDEVMTGFRVELGGAQAYYDVKPDLTCLGKIIGGGMPVGAFGGRREVMAALAPTGPVYQAGTLSGNPVAIAAGYACLREVARPGVHQQLTQQTERLAQGLLAAAEAAGVPLVVNRVGGMFGLFFTESPTVTCFQDVQACDVDRFKRFFHLMLAAGVYLAPSAFEAGFMSLAHGDAEIRHTVEAAAQSFAQL.

Lys-265 carries the post-translational modification N6-(pyridoxal phosphate)lysine.

Belongs to the class-III pyridoxal-phosphate-dependent aminotransferase family. HemL subfamily. In terms of assembly, homodimer. Requires pyridoxal 5'-phosphate as cofactor.

The protein localises to the cytoplasm. It carries out the reaction (S)-4-amino-5-oxopentanoate = 5-aminolevulinate. The protein operates within porphyrin-containing compound metabolism; protoporphyrin-IX biosynthesis; 5-aminolevulinate from L-glutamyl-tRNA(Glu): step 2/2. This is Glutamate-1-semialdehyde 2,1-aminomutase from Sodalis glossinidius (strain morsitans).